The following is a 306-amino-acid chain: tRNA pseudouridine synthase B (306 aa).

The active-site Nucleophile is Asp-48.

It belongs to the pseudouridine synthase TruB family. Type 1 subfamily.

It catalyses the reaction uridine(55) in tRNA = pseudouridine(55) in tRNA. Functionally, responsible for synthesis of pseudouridine from uracil-55 in the psi GC loop of transfer RNAs. This is tRNA pseudouridine synthase B from Chromobacterium violaceum (strain ATCC 12472 / DSM 30191 / JCM 1249 / CCUG 213 / NBRC 12614 / NCIMB 9131 / NCTC 9757 / MK).